The primary structure comprises 428 residues: Type II methyltransferase M.TthHB8I (428 aa).

Residues 407–428 form a disordered region; that stretch reads RKGNTERRKHGPYTSPESAGSF.

It belongs to the N(4)/N(6)-methyltransferase family.

The enzyme catalyses a 2'-deoxyadenosine in DNA + S-adenosyl-L-methionine = an N(6)-methyl-2'-deoxyadenosine in DNA + S-adenosyl-L-homocysteine + H(+). Functionally, a gamma subtype methylase, recognizes the double-stranded sequence 5'-TCGA-3', methylates A-4 on both strands and protects the DNA from cleavage by the TthHB8I endonuclease. In Thermus thermophilus (strain ATCC 27634 / DSM 579 / HB8), this protein is Type II methyltransferase M.TthHB8I.